A 275-amino-acid chain; its full sequence is LexA repressor (275 aa).

The tract at residues 1–50 (MKRSTPRPARSQAALTTSSEESPDRVERGGDGVATVTDFPDGPPDETGLT) is disordered. The segment at residues 73 to 93 (MREIGEAVGLTSTSSVAHQLM) is a DNA-binding region (H-T-H motif). The disordered stretch occupies residues 114–151 (RSAESAVPDASAGHSPAADRAPSARRPPRGPSPIDSNP). Active-site for autocatalytic cleavage activity residues include Ser-199 and Lys-236.

Belongs to the peptidase S24 family. Homodimer.

It carries out the reaction Hydrolysis of Ala-|-Gly bond in repressor LexA.. Its function is as follows. Represses a number of genes involved in the response to DNA damage (SOS response), including recA and lexA. In the presence of single-stranded DNA, RecA interacts with LexA causing an autocatalytic cleavage which disrupts the DNA-binding part of LexA, leading to derepression of the SOS regulon and eventually DNA repair. The polypeptide is LexA repressor (Acidothermus cellulolyticus (strain ATCC 43068 / DSM 8971 / 11B)).